Consider the following 569-residue polypeptide: Serine/threonine-protein kinase gad8 (569 aa).

The segment at 19-63 is disordered; that stretch reads GLNSGGSSFTRGLKNSTLSSTSSRKSSDEKSRKSSEDKRSPQSTV. The segment covering 31–42 has biased composition (low complexity); it reads LKNSTLSSTSSR. Over residues 43–58 the composition is skewed to basic and acidic residues; that stretch reads KSSDEKSRKSSEDKRS. Positions 45 to 202 constitute a C2 domain; the sequence is SDEKSRKSSE…IVNKLTDEWV (158 aa). The region spanning 230-485 is the Protein kinase domain; it reads FELLKVVGKG…AQEIKNHPFF (256 aa). ATP-binding positions include 236 to 244 and K259; that span reads VGKGSFGKV. D353 (proton acceptor) is an active-site residue. At T387 the chain carries Phosphothreonine; by ksg1. Positions 486–557 constitute an AGC-kinase C-terminal domain; the sequence is DDIDWKKLCA…QRPTTIDTSD (72 aa). Phosphoserine; by TORC2 is present on residues S527 and S546.

Belongs to the protein kinase superfamily. AGC Ser/Thr protein kinase family. Phosphorylated by ksg1 and target of rapamycin complex 2 (TORC2), affecting the kinase activity of gad8 in a nutrient-dependent manner.

The enzyme catalyses L-seryl-[protein] + ATP = O-phospho-L-seryl-[protein] + ADP + H(+). It catalyses the reaction L-threonyl-[protein] + ATP = O-phospho-L-threonyl-[protein] + ADP + H(+). Functionally, involved in a signaling module for sexual development and cell growth under stressed conditions. Required for G1 arrest under nitrogen starvation and for growth at high temperature and osmolarity. In Schizosaccharomyces pombe (strain 972 / ATCC 24843) (Fission yeast), this protein is Serine/threonine-protein kinase gad8.